Here is a 472-residue protein sequence, read N- to C-terminus: UDP-N-acetylmuramate--L-alanine ligase (472 aa).

An ATP-binding site is contributed by 122 to 128; it reads GSHGKTT.

It belongs to the MurCDEF family.

It is found in the cytoplasm. The enzyme catalyses UDP-N-acetyl-alpha-D-muramate + L-alanine + ATP = UDP-N-acetyl-alpha-D-muramoyl-L-alanine + ADP + phosphate + H(+). Its pathway is cell wall biogenesis; peptidoglycan biosynthesis. Cell wall formation. The polypeptide is UDP-N-acetylmuramate--L-alanine ligase (Myxococcus xanthus (strain DK1622)).